The chain runs to 119 residues: Iron-sulfur cluster insertion protein ErpA (119 aa).

Iron-sulfur cluster-binding residues include Cys-47, Cys-111, and Cys-113.

This sequence belongs to the HesB/IscA family. In terms of assembly, homodimer. It depends on iron-sulfur cluster as a cofactor.

In terms of biological role, required for insertion of 4Fe-4S clusters for at least IspG. This Alcanivorax borkumensis (strain ATCC 700651 / DSM 11573 / NCIMB 13689 / SK2) protein is Iron-sulfur cluster insertion protein ErpA.